Consider the following 266-residue polypeptide: Prolactin-7A1 (266 aa).

An N-terminal signal peptide occupies residues 1–30 (MPLSFTQPCSSGALLLLVVSNLLLWENVAC). N-linked (GlcNAc...) asparagine glycosylation is found at Asn-36, Asn-58, Asn-110, Asn-149, and Asn-157. Intrachain disulfides connect Cys-114–Cys-231 and Cys-248–Cys-257.

The protein belongs to the somatotropin/prolactin family. Expressed specifically in the placenta. Detected only in the trophoblast giant cells.

The protein localises to the secreted. This Mus musculus (Mouse) protein is Prolactin-7A1 (Prl7a1).